Here is a 511-residue protein sequence, read N- to C-terminus: 2-isopropylmalate synthase (511 aa).

A Pyruvate carboxyltransferase domain is found at I5–K267. 4 residues coordinate Mn(2+): D14, H202, H204, and N238. Residues K391–S511 form a regulatory domain region.

The protein belongs to the alpha-IPM synthase/homocitrate synthase family. LeuA type 1 subfamily. Homodimer. Mn(2+) serves as cofactor.

Its subcellular location is the cytoplasm. The enzyme catalyses 3-methyl-2-oxobutanoate + acetyl-CoA + H2O = (2S)-2-isopropylmalate + CoA + H(+). Its pathway is amino-acid biosynthesis; L-leucine biosynthesis; L-leucine from 3-methyl-2-oxobutanoate: step 1/4. Its function is as follows. Catalyzes the condensation of the acetyl group of acetyl-CoA with 3-methyl-2-oxobutanoate (2-ketoisovalerate) to form 3-carboxy-3-hydroxy-4-methylpentanoate (2-isopropylmalate). The sequence is that of 2-isopropylmalate synthase from Staphylococcus saprophyticus subsp. saprophyticus (strain ATCC 15305 / DSM 20229 / NCIMB 8711 / NCTC 7292 / S-41).